A 118-amino-acid chain; its full sequence is Large ribosomal subunit protein bL20 (118 aa).

The protein belongs to the bacterial ribosomal protein bL20 family.

In terms of biological role, binds directly to 23S ribosomal RNA and is necessary for the in vitro assembly process of the 50S ribosomal subunit. It is not involved in the protein synthesizing functions of that subunit. The polypeptide is Large ribosomal subunit protein bL20 (Desulforamulus reducens (strain ATCC BAA-1160 / DSM 100696 / MI-1) (Desulfotomaculum reducens)).